Consider the following 416-residue polypeptide: Hepatic and glial cell adhesion molecule (416 aa).

Positions 1–33 (MKRERGALSRASRALRLAPFVYLLLIQTDPLEG) are cleaved as a signal peptide. In terms of domain architecture, Ig-like V-type spans 34–142 (VNITSPVRLI…GEKTINLTVD (109 aa)). Topologically, residues 34–240 (VNITSPVRLI…VKITVYRRSS (207 aa)) are extracellular. Residues asparagine 35, asparagine 138, asparagine 167, and asparagine 189 are each glycosylated (N-linked (GlcNAc...) asparagine). One can recognise an Ig-like C2-type domain in the interval 148–234 (PQVLVASTTV…QGRSLPVKIT (87 aa)). Cysteine 168 and cysteine 217 are disulfide-bonded. The chain crosses the membrane as a helical span at residues 241–261 (LYIILSTGGIFLLVTLVTVCA). At 262-416 (CWKPSKRKQK…DEAGPVEISA (155 aa)) the chain is on the cytoplasmic side. A disordered region spans residues 273–416 (LEKQNSLEYM…DEAGPVEISA (144 aa)). Serine 278 is modified (phosphoserine). Residues 285–306 (NDDRLKPEADTLPRSGEQERKN) are compositionally biased toward basic and acidic residues. A phosphoserine mark is found at serine 350 and serine 377. Over residues 383 to 398 (SSPGRSRSASRTLRTA) the composition is skewed to low complexity.

In terms of assembly, homodimer. Dimer formation occurs predominantly through cis interactions on the cell surface. Part of a complex containing MLC1, TRPV4, AQP4 and ATP1B1. Interacts with CLCN2. N-glycosylated.

It is found in the cytoplasm. Its subcellular location is the cell membrane. In terms of biological role, involved in regulating cell motility and cell-matrix interactions. May inhibit cell growth through suppression of cell proliferation. In glia, associates and targets CLCN2 at astrocytic processes and myelinated fiber tracts where it may regulate transcellular chloride flux involved in neuron excitability. The polypeptide is Hepatic and glial cell adhesion molecule (Homo sapiens (Human)).